The following is a 1604-amino-acid chain: Transposon Ty1-DR4 Gag-Pol polyprotein (1604 aa).

3 stretches are compositionally biased toward polar residues: residues 1–23, 48–60, and 127–152; these read MESQQLSQHSPISHGSACASVTS, TKANSQQTTTPAS, and QSQFPQYPSSVGTPLSTPSPESGNTF. Disordered stretches follow at residues 1-93, 126-174, and 352-421; these read MESQ…MMTQ, PQSQ…PPPM, and GSRN…SKST. Over residues 153–165 the composition is skewed to low complexity; sequence TDSSSADSDMTST. Residues 299 to 401 form an RNA-binding region; the sequence is NNGIHINNKV…NSKSKTARAH (103 aa). Over residues 402 to 418 the composition is skewed to low complexity; it reads NVSTSNNSPSTDNDSIS. The residue at position 416 (Ser-416) is a Phosphoserine. Asp-461 acts as the For protease activity; shared with dimeric partner in catalysis. The integrase-type zinc finger-like stretch occupies residues 583-640; that stretch reads NVHTSESTRKYPYPFIHRMLAHANAQTIRYSLKNNTITYFNESDVDWSSAIDYQCPDC. Residues 660-835 enclose the Integrase catalytic domain; it reads NSYEPFQYLH…AGLDISTLLP (176 aa). Residues Asp-671 and Asp-736 each coordinate Mg(2+). Disordered regions lie at residues 956-1087, 1092-1111, and 1130-1187; these read SKAV…ETEK, RSPSIDASPPENNSSHNIVP, and DLPL…DNET. Positions 960 to 969 are enriched in low complexity; the sequence is SPTDSTPPST. Polar residues predominate over residues 1005–1015; sequence STPQISNIEST. Residues 1038–1053 are compositionally biased toward basic and acidic residues; that stretch reads ESSHASKSKDFRHSDS. 2 stretches are compositionally biased toward polar residues: residues 1054-1082 and 1101-1111; these read YSENETNHTNVPISSTGGTNNKTVPQISD and PENNSSHNIVP. Positions 1178-1212 match the Bipartite nuclear localization signal motif; it reads KKRSLEDNETEIKVSRDTWNTKNMRSLEPPRSKKR. The 139-residue stretch at 1338-1476 folds into the Reverse transcriptase Ty1/copia-type domain; the sequence is NNYYITQLDI…DILGLEIKYQ (139 aa). Residues Asp-1346, Asp-1427, and Asp-1428 each coordinate Mg(2+).

In terms of assembly, the capsid protein forms a homotrimer, from which the VLPs are assembled. The protease is a homodimer, whose active site consists of two apposed aspartic acid residues. In terms of processing, initially, virus-like particles (VLPs) are composed of the structural unprocessed proteins Gag and Gag-Pol, and also contain the host initiator methionine tRNA (tRNA(i)-Met) which serves as a primer for minus-strand DNA synthesis, and a dimer of genomic Ty RNA. Processing of the polyproteins occurs within the particle and proceeds by an ordered pathway, called maturation. First, the protease (PR) is released by autocatalytic cleavage of the Gag-Pol polyprotein yielding capsid protein p45 and a Pol-p154 precursor protein. This cleavage is a prerequisite for subsequent processing of Pol-p154 at the remaining sites to release the mature structural and catalytic proteins. Maturation takes place prior to the RT reaction and is required to produce transposition-competent VLPs.

It localises to the cytoplasm. The protein resides in the nucleus. The enzyme catalyses DNA(n) + a 2'-deoxyribonucleoside 5'-triphosphate = DNA(n+1) + diphosphate. The catalysed reaction is Endonucleolytic cleavage to 5'-phosphomonoester.. In terms of biological role, capsid protein (CA) is the structural component of the virus-like particle (VLP), forming the shell that encapsulates the retrotransposons dimeric RNA genome. The particles are assembled from trimer-clustered units and there are holes in the capsid shells that allow for the diffusion of macromolecules. CA also has nucleocapsid-like chaperone activity, promoting primer tRNA(i)-Met annealing to the multipartite primer-binding site (PBS), dimerization of Ty1 RNA and initiation of reverse transcription. The aspartyl protease (PR) mediates the proteolytic cleavages of the Gag and Gag-Pol polyproteins after assembly of the VLP. Its function is as follows. Reverse transcriptase/ribonuclease H (RT) is a multifunctional enzyme that catalyzes the conversion of the retro-elements RNA genome into dsDNA within the VLP. The enzyme displays a DNA polymerase activity that can copy either DNA or RNA templates, and a ribonuclease H (RNase H) activity that cleaves the RNA strand of RNA-DNA heteroduplexes during plus-strand synthesis and hydrolyzes RNA primers. The conversion leads to a linear dsDNA copy of the retrotransposon that includes long terminal repeats (LTRs) at both ends. Functionally, integrase (IN) targets the VLP to the nucleus, where a subparticle preintegration complex (PIC) containing at least integrase and the newly synthesized dsDNA copy of the retrotransposon must transit the nuclear membrane. Once in the nucleus, integrase performs the integration of the dsDNA into the host genome. The sequence is that of Transposon Ty1-DR4 Gag-Pol polyprotein (TY1B-DR4) from Saccharomyces cerevisiae (strain ATCC 204508 / S288c) (Baker's yeast).